The primary structure comprises 488 residues: Altronate oxidoreductase (488 aa).

Residue 18–29 (VIQFGEGNFLRA) coordinates NAD(+).

It belongs to the mannitol dehydrogenase family. UxaB subfamily.

It carries out the reaction D-altronate + NAD(+) = keto-D-tagaturonate + NADH + H(+). It participates in carbohydrate metabolism; pentose and glucuronate interconversion. This is Altronate oxidoreductase from Pectobacterium carotovorum subsp. carotovorum (strain PC1).